A 720-amino-acid chain; its full sequence is Engulfment and cell motility protein 2 (720 aa).

Phosphotyrosine is present on tyrosine 48. The region spanning 310–484 (QAQRDIIFEL…QVVREQITRA (175 aa)) is the ELMO domain. A Phosphoserine modification is found at serine 503. Residues 553 to 674 (SSFRKIGNRR…LLGKDMSSEL (122 aa)) enclose the PH domain. The short motif at 700 to 707 (PEAPPPVP) is the SH3-binding element. Tyrosine 717 carries the post-translational modification Phosphotyrosine.

Interacts directly with the SH3-domain of DOCK1 via its SH3-binding site. Probably forms a heterotrimeric complex with DOCK1 and RAC1. Interacts with ARHGEF16, DOCK4 and EPHA2; mediates activation of RAC1 by EPHA2. Interacts with ADGRB3. Interacts with AUTS2; the interaction is direct.

It is found in the cytoplasm. The protein localises to the cytosol. It localises to the membrane. Involved in cytoskeletal rearrangements required for phagocytosis of apoptotic cells and cell motility. Acts in association with DOCK1 and CRK. Was initially proposed to be required in complex with DOCK1 to activate Rac Rho small GTPases. May enhance the guanine nucleotide exchange factor (GEF) activity of DOCK1. This chain is Engulfment and cell motility protein 2 (ELMO2), found in Bos taurus (Bovine).